A 377-amino-acid polypeptide reads, in one-letter code: Glutamate 5-kinase (377 aa).

Lysine 20 is a binding site for ATP. Substrate is bound by residues serine 60, aspartate 147, and asparagine 159. Residue 179–180 (TD) participates in ATP binding. Positions 285–363 (AGRLVIDDGA…DKVYQVLGEA (79 aa)) constitute a PUA domain.

The protein belongs to the glutamate 5-kinase family.

It localises to the cytoplasm. It catalyses the reaction L-glutamate + ATP = L-glutamyl 5-phosphate + ADP. It functions in the pathway amino-acid biosynthesis; L-proline biosynthesis; L-glutamate 5-semialdehyde from L-glutamate: step 1/2. Catalyzes the transfer of a phosphate group to glutamate to form L-glutamate 5-phosphate. The sequence is that of Glutamate 5-kinase from Acinetobacter baumannii (strain SDF).